An 892-amino-acid polypeptide reads, in one-letter code: Ataxin-7 (892 aa).

A compositionally biased stretch (basic and acidic residues) spans 1-15 (MSERAADDVRGEPRR). 2 disordered regions span residues 1–74 (MSER…SAAA) and 195–247 (SKGG…SRVP). Low complexity predominate over residues 16 to 38 (AAAAAGGAAAAAARQQQQQQQQQ). Over residues 39–55 (QPPPPQPQRQQHPPPPP) the composition is skewed to pro residues. Residues 195–222 (SKGGSASGSNRSSSGGVLSASSSSSKLL) show a composition bias toward low complexity. A Glycyl lysine isopeptide (Lys-Gly) (interchain with G-Cter in SUMO); alternate cross-link involves residue Lys257. Lys257 is covalently cross-linked (Glycyl lysine isopeptide (Lys-Gly) (interchain with G-Cter in SUMO2); alternate). 4 disordered regions span residues 298-328 (PTLP…NSNN), 389-505 (HKNK…ESVE), 616-730 (KSVP…SSHS), and 818-892 (SHGS…KARP). 2 stretches are compositionally biased toward basic and acidic residues: residues 318-327 (LEKKPEDNSN) and 389-403 (HKNK…RHPD). In terms of domain architecture, SCA7 spans 334–401 (KRLSEREFDP…KTREKELIRH (68 aa)). Pro residues-rich tracts occupy residues 405–419 (QQPP…PAPP), 448–458 (HTPSLPRPPGC), and 468–483 (IDPP…PLPA). Acidic residues predominate over residues 493–502 (EEGEGDDKEE). A compositionally biased stretch (polar residues) spans 616-629 (KSVPAHGTTLNAQP). The segment covering 640 to 669 (SMQSRQVSSSSSSPSTPSGLSSVPSSPMSR) has biased composition (low complexity). Basic residues predominate over residues 670–680 (KPQKLKSSKSL). Residues 685-695 (SSGNSTNCQNA) show a composition bias toward polar residues. Composition is skewed to low complexity over residues 716–730 (HSSS…SSHS) and 840–851 (SPSSSSINNSSS).

Belongs to the ataxin-7 family. As to quaternary structure, component of the SAGA transcription coactivator-HAT complex, at least composed of SUPT3H, GCN5L2, TAF5L, TAF6L, SUPT7L, TADA3L, TAD1L, TAF10, TAF12, TRRAP, TAF9 and ATXN7. The STAGA core complex is associated with a subcomplex required for histone deubiquitination composed of ATXN7L3, ENY2 and USP22. Interacts with SORBS1, PSMC1 and CRX. Interacts with TRRAP, GCN5L2 and TAF10. Interacts with alpha tubulin. Proteolytically cleaved by caspase-7 (CASP7). The cleavage may be involved in SCA7 degeneration: the isoform fragments may exert distinct toxic influences that could contribute to selective neurodegeneration. Post-translationally, sumoylation decreases the aggregation propensity and cellular toxicity of forms with an expanded poly-Gln region but has no effect on subcellular location or interaction with components of the STAGA complex. In terms of tissue distribution, isoform a is expressed in CNS, but is expressed predominantly in the peripherical tissues. As to expression, isoform b is expressed in CNS. Also highly expressed in the frontal lobe, skeletal muscle and spinal cord and is expressed at a lower level in the lung, lymphoblast and intestine.

It localises to the nucleus. The protein localises to the nucleolus. It is found in the nucleus matrix. The protein resides in the cytoplasm. Its subcellular location is the cytoskeleton. In terms of biological role, acts as a component of the SAGA (aka STAGA) transcription coactivator-HAT complex. Mediates the interaction of SAGA complex with the CRX and is involved in CRX-dependent gene activation. Probably involved in tethering the deubiquitination module within the SAGA complex. Necessary for microtubule cytoskeleton stabilization. Involved in neurodegeneration. The polypeptide is Ataxin-7 (ATXN7) (Homo sapiens (Human)).